Reading from the N-terminus, the 1222-residue chain is Alpha-mannosidase D (1222 aa).

An N-terminal signal peptide occupies residues 1-21 (MESSKFVKIIWVFGIWILVFT). Topologically, residues 22–1170 (FLIIYNNYDY…KYNRPNHLAL (1149 aa)) are extracellular. Zn(2+) is bound by residues His71 and Asp73. N-linked (GlcNAc...) asparagine glycosylation occurs at Asn175. Residues Asp185 and His453 each contribute to the Zn(2+) site. Asp185 serves as the catalytic Nucleophile. Asn492, Asn496, Asn547, Asn551, Asn566, Asn613, Asn665, Asn768, Asn785, Asn952, Asn981, Asn1069, and Asn1084 each carry an N-linked (GlcNAc...) asparagine glycan. Over residues 493–549 (KSNNKTNNNNNNNNKNNNNNNNNNNNNNNNLKNTNSISTTGSSSSSGSGSSNNNNNT) the composition is skewed to low complexity. A disordered region spans residues 493-554 (KSNNKTNNNN…NNNNTVNKSE (62 aa)). A helical transmembrane segment spans residues 1171-1191 (ILSLSIGIPAGILIIVIALVV). Topologically, residues 1192–1222 (TYKKRKNRKTLTSSNSSSNLIQQEDQTDYSP) are cytoplasmic. Positions 1202–1211 (LTSSNSSSNL) are enriched in low complexity. Residues 1202-1222 (LTSSNSSSNLIQQEDQTDYSP) form a disordered region. Polar residues predominate over residues 1212–1222 (IQQEDQTDYSP).

This sequence belongs to the glycosyl hydrolase 38 family. The cofactor is Zn(2+).

The protein localises to the membrane. It catalyses the reaction Hydrolysis of terminal, non-reducing alpha-D-mannose residues in alpha-D-mannosides.. This is Alpha-mannosidase D (manD) from Dictyostelium discoideum (Social amoeba).